We begin with the raw amino-acid sequence, 614 residues long: Sodium- and chloride-dependent betaine transporter (614 aa).

Topologically, residues 1-44 (MDRKVTVHEDGCPVVSWVPEEGEMMDQKDKDQVKDRGQWTNKME) are cytoplasmic. 3 helical membrane passes run 45 to 65 (FVLS…FPYL), 73 to 92 (AFFI…VFFL), and 117 to 137 (GIGM…IIIL). Over 138–210 (AWALFYLFSS…SGIHDLGSLR (73 aa)) the chain is Extracellular. Residues asparagine 171 and asparagine 183 are each glycosylated (N-linked (GlcNAc...) asparagine). A run of 9 helical transmembrane segments spans residues 211–229 (WELA…FCIW), 238–255 (VVYF…ILLI), 291–308 (IFFS…LGSY), 320–341 (IALC…FSIL), 374–393 (MPLS…FLGL), 423–441 (LLIL…LLVT), 458–478 (GICL…VYGA), 499–518 (ISWL…FSLS), and 538–556 (IGWL…FIII). Over 557-614 (TLLKTQGSFKKRLQRLITPDPSLPQPGRRSPQDGSSAQNCSTSPVKQELIAWEKETHL) the chain is Cytoplasmic. A disordered region spans residues 574-600 (TPDPSLPQPGRRSPQDGSSAQNCSTSP). The residue at position 586 (serine 586) is a Phosphoserine. Polar residues predominate over residues 588–600 (QDGSSAQNCSTSP).

The protein belongs to the sodium:neurotransmitter symporter (SNF) (TC 2.A.22) family. SLC6A12 subfamily. Interacts with LIN7C.

The protein resides in the basolateral cell membrane. It localises to the cell membrane. The catalysed reaction is 4-aminobutanoate(out) + chloride(out) + 3 Na(+)(out) = 4-aminobutanoate(in) + chloride(in) + 3 Na(+)(in). The enzyme catalyses glycine betaine(out) + 2 chloride(out) + 3 Na(+)(out) = glycine betaine(in) + 2 chloride(in) + 3 Na(+)(in). Functionally, transporter that mediates cellular uptake of betaine and GABA in a sodium- and chloride-dependent process. May have a role in regulation of GABAergic transmission in the brain through the reuptake of GABA into presynaptic terminals, as well as in osmotic regulation. Probably also involved in renal and hepatic osmotic regulation. The polypeptide is Sodium- and chloride-dependent betaine transporter (Slc6a12) (Rattus norvegicus (Rat)).